A 304-amino-acid chain; its full sequence is dTDP-4-dehydrorhamnose reductase (304 aa).

Residues 16-18, 42-43, and 66-68 contribute to the NADH site; these read GML, DI, and AWT. Residues 17-18, 42-43, and 66-68 contribute to the NADPH site; these read ML, DI, and AWT. A dTDP-beta-L-rhamnose-binding site is contributed by 107–108; the sequence is TD. NADH is bound by residues Tyr131 and Lys135. Residues Tyr131 and Lys135 each contribute to the NADPH site. The active-site Proton donor/acceptor is Tyr131. Trp157 serves as a coordination point for dTDP-beta-L-rhamnose.

The protein belongs to the dTDP-4-dehydrorhamnose reductase family. In terms of assembly, homodimer. It depends on Mg(2+) as a cofactor.

It catalyses the reaction dTDP-beta-L-rhamnose + NADP(+) = dTDP-4-dehydro-beta-L-rhamnose + NADPH + H(+). It participates in carbohydrate biosynthesis; dTDP-L-rhamnose biosynthesis. Its pathway is antibiotic biosynthesis; streptomycin biosynthesis. Involved in the biosynthesis of the streptose moiety of streptomycin. Catalyzes the reduction of dTDP-6-deoxy-L-lyxo-4-hexulose to yield dTDP-L-rhamnose. RmlD uses NADH and NADPH nearly equally well. The polypeptide is dTDP-4-dehydrorhamnose reductase (Streptomyces griseus).